A 608-amino-acid chain; its full sequence is Phosphomethylpyrimidine synthase (608 aa).

Substrate contacts are provided by residues N216, M245, Y274, H310, 330 to 332 (SRG), 371 to 374 (DGLR), and E410. A Zn(2+)-binding site is contributed by H414. Y437 provides a ligand contact to substrate. H478 lines the Zn(2+) pocket. 3 residues coordinate [4Fe-4S] cluster: C558, C561, and C566.

It belongs to the ThiC family. Homodimer. Requires [4Fe-4S] cluster as cofactor.

The catalysed reaction is 5-amino-1-(5-phospho-beta-D-ribosyl)imidazole + S-adenosyl-L-methionine = 4-amino-2-methyl-5-(phosphooxymethyl)pyrimidine + CO + 5'-deoxyadenosine + formate + L-methionine + 3 H(+). It participates in cofactor biosynthesis; thiamine diphosphate biosynthesis. Functionally, catalyzes the synthesis of the hydroxymethylpyrimidine phosphate (HMP-P) moiety of thiamine from aminoimidazole ribotide (AIR) in a radical S-adenosyl-L-methionine (SAM)-dependent reaction. The sequence is that of Phosphomethylpyrimidine synthase from Ruegeria sp. (strain TM1040) (Silicibacter sp.).